The following is a 164-amino-acid chain: Peptidyl-prolyl cis-trans isomerase A-like 4A (164 aa).

One can recognise a PPIase cyclophilin-type domain in the interval 7-163 (FFDITVDGKP…KKITIADCGQ (157 aa)).

Belongs to the cyclophilin-type PPIase family. PPIase A subfamily. In terms of tissue distribution, highly expressed in brain, ovary and mammary gland. Moderately expressed in lung, salivary gland, kidney, skin, adipose tissue, intestine and spleen. Weakly expressed in skeletal muscle, liver and stomach. Expressed in pleiomorphic and undifferentiated liposarcomas, osteosarcomas and breast carcinomas.

It is found in the cytoplasm. The enzyme catalyses [protein]-peptidylproline (omega=180) = [protein]-peptidylproline (omega=0). Its function is as follows. PPIases accelerate the folding of proteins. It catalyzes the cis-trans isomerization of proline imidic peptide bonds in oligopeptides. In Homo sapiens (Human), this protein is Peptidyl-prolyl cis-trans isomerase A-like 4A.